The primary structure comprises 605 residues: Putative zinc finger CCCH domain-containing protein 57 (605 aa).

3 disordered regions span residues 198–218 (RHTG…GREV), 238–261 (LLQD…DGEV), and 375–403 (QASH…YQQP). Basic and acidic residues-rich tracts occupy residues 201-218 (GHES…GREV) and 238-250 (LLQD…RADA). The span at 389–403 (FPFQQQPQHDGYQQP) shows a compositional bias: low complexity. 2 C3H1-type zinc fingers span residues 519-547 (EPKT…HSQD) and 557-585 (KYRT…QHRL).

The protein is Putative zinc finger CCCH domain-containing protein 57 of Oryza sativa subsp. japonica (Rice).